We begin with the raw amino-acid sequence, 295 residues long: MNGYWKPALVVLGLVSLSYAFTTIETEIFQLQNEISTKYGPDMNFYKFLKLPKLQNSSTKEITKNLRKLSKKYHPDKNPKYRKLYERLNLATQILSNSSNRKIYDYYLQNGFPNYDFHKGGFYFSRMKPKTWFLLAFIWIVVNIGQYIISIIQYRSQRSRIENFISQCKQQDDTNGLGVKQLTFKQHEKDEGKSLVVRFSDVYVVEPDGSETLISPDTLDKPSVKNCLFWRIPASVWNMTFGKSVGSAGKEEIITDSKKYDGNQTKKGNKVKKGSAKKGQKKMELPNGKVIYSRK.

Residues 1–20 form the signal peptide; it reads MNGYWKPALVVLGLVSLSYA. Residues 21-130 are Lumenal-facing; it reads FTTIETEIFQ…GFYFSRMKPK (110 aa). One can recognise a J domain in the interval 42–110; the sequence is DMNFYKFLKL…RKIYDYYLQN (69 aa). A helical membrane pass occupies residues 131–151; sequence TWFLLAFIWIVVNIGQYIISI. Topologically, residues 152–295 are cytoplasmic; the sequence is IQYRSQRSRI…PNGKVIYSRK (144 aa). Residues 259 to 287 are disordered; the sequence is KYDGNQTKKGNKVKKGSAKKGQKKMELPN. Residues 267–280 show a composition bias toward basic residues; the sequence is KGNKVKKGSAKKGQ.

The protein belongs to the DnaJ family.

The protein resides in the endoplasmic reticulum membrane. Its function is as follows. DnaJ-like chaperone required for the folding capacity of the endoplasmic reticulum. This Saccharomyces cerevisiae (strain ATCC 204508 / S288c) (Baker's yeast) protein is ER-localized J domain-containing protein 5 (ERJ5).